The primary structure comprises 239 residues: Lipoprotein-releasing system ATP-binding protein LolD (239 aa).

Residues 9–239 (LQVQHVSKHY…AATSPTGLAE (231 aa)) form the ABC transporter domain. 45-52 (GSSGSGKS) contacts ATP.

This sequence belongs to the ABC transporter superfamily. Lipoprotein translocase (TC 3.A.1.125) family. The complex is composed of two ATP-binding proteins (LolD) and two transmembrane proteins (LolC and LolE).

Its subcellular location is the cell inner membrane. Functionally, part of the ABC transporter complex LolCDE involved in the translocation of mature outer membrane-directed lipoproteins, from the inner membrane to the periplasmic chaperone, LolA. Responsible for the formation of the LolA-lipoprotein complex in an ATP-dependent manner. The protein is Lipoprotein-releasing system ATP-binding protein LolD of Shewanella frigidimarina (strain NCIMB 400).